Reading from the N-terminus, the 413-residue chain is Multifunctional CCA protein (413 aa).

The ATP site is built by Gly8 and Arg11. CTP is bound by residues Gly8 and Arg11. Positions 21 and 23 each coordinate Mg(2+). ATP contacts are provided by Arg91, Arg137, and Arg140. Arg91, Arg137, and Arg140 together coordinate CTP. The region spanning 228–329 is the HD domain; that stretch reads TGLHTLMTVT…VKLFDSIDAW (102 aa).

This sequence belongs to the tRNA nucleotidyltransferase/poly(A) polymerase family. Bacterial CCA-adding enzyme type 1 subfamily. As to quaternary structure, monomer. Can also form homodimers and oligomers. It depends on Mg(2+) as a cofactor. The cofactor is Ni(2+).

It carries out the reaction a tRNA precursor + 2 CTP + ATP = a tRNA with a 3' CCA end + 3 diphosphate. The enzyme catalyses a tRNA with a 3' CCA end + 2 CTP + ATP = a tRNA with a 3' CCACCA end + 3 diphosphate. Its function is as follows. Catalyzes the addition and repair of the essential 3'-terminal CCA sequence in tRNAs without using a nucleic acid template. Adds these three nucleotides in the order of C, C, and A to the tRNA nucleotide-73, using CTP and ATP as substrates and producing inorganic pyrophosphate. tRNA 3'-terminal CCA addition is required both for tRNA processing and repair. Also involved in tRNA surveillance by mediating tandem CCA addition to generate a CCACCA at the 3' terminus of unstable tRNAs. While stable tRNAs receive only 3'-terminal CCA, unstable tRNAs are marked with CCACCA and rapidly degraded. The polypeptide is Multifunctional CCA protein (Klebsiella pneumoniae (strain 342)).